Reading from the N-terminus, the 294-residue chain is ATP phosphoribosyltransferase (294 aa).

It belongs to the ATP phosphoribosyltransferase family. Long subfamily. Mg(2+) is required as a cofactor.

It localises to the cytoplasm. It catalyses the reaction 1-(5-phospho-beta-D-ribosyl)-ATP + diphosphate = 5-phospho-alpha-D-ribose 1-diphosphate + ATP. The protein operates within amino-acid biosynthesis; L-histidine biosynthesis; L-histidine from 5-phospho-alpha-D-ribose 1-diphosphate: step 1/9. Its activity is regulated as follows. Feedback inhibited by histidine. Catalyzes the condensation of ATP and 5-phosphoribose 1-diphosphate to form N'-(5'-phosphoribosyl)-ATP (PR-ATP). Has a crucial role in the pathway because the rate of histidine biosynthesis seems to be controlled primarily by regulation of HisG enzymatic activity. This chain is ATP phosphoribosyltransferase, found in Chlorobium chlorochromatii (strain CaD3).